An 80-amino-acid chain; its full sequence is U6 snRNA-associated Sm-like protein LSm6 (80 aa).

Residues 7 to 79 form the Sm domain; it reads TPSDFLKQII…VLYISTQKRR (73 aa). An N6-acetyllysine modification is found at Lys-59.

Belongs to the snRNP Sm proteins family. SmF/LSm6 subfamily. As to quaternary structure, component of the precatalytic spliceosome (spliceosome B complex). Component of the U4/U6-U5 tri-snRNP complex, a building block of the precatalytic spliceosome (spliceosome B complex). The U4/U6-U5 tri-snRNP complex is composed of the U4, U6 and U5 snRNAs and at least PRPF3, PRPF4, PRPF6, PRPF8, PRPF31, SNRNP200, TXNL4A, SNRNP40, SNRPB, SNRPD1, SNRPD2, SNRPD3, SNRPE, SNRPF, SNRPG, DDX23, CD2BP2, PPIH, SNU13, EFTUD2, SART1 and USP39, plus LSM2, LSM3, LSM4, LSM5, LSM6, LSM7 and LSM8. LSM2, LSM3, LSM4, LSM5, LSM6, LSM7 and LSM8 form a heptameric, ring-shaped subcomplex (the LSM2-8 complex) that is part of the U4/U6-U5 tri-snRNP complex and the precatalytic spliceosome. Component of the heptameric LSM1-LSM7 complex, which consists of LSM1, LSM2, LSM3, LSM4, LSM5, LSM6 and LSM7.

It localises to the cytoplasm. Its subcellular location is the nucleus. Plays a role in pre-mRNA splicing as component of the U4/U6-U5 tri-snRNP complex that is involved in spliceosome assembly, and as component of the precatalytic spliceosome (spliceosome B complex). The heptameric LSM2-8 complex binds specifically to the 3'-terminal U-tract of U6 snRNA. Component of LSm protein complexes, which are involved in RNA processing and may function in a chaperone-like manner, facilitating the efficient association of RNA processing factors with their substrates. Component of the cytoplasmic LSM1-LSM7 complex, which is thought to be involved in mRNA degradation by activating the decapping step in the 5'-to-3' mRNA decay pathway. The polypeptide is U6 snRNA-associated Sm-like protein LSm6 (LSM6) (Homo sapiens (Human)).